The chain runs to 274 residues: MREYLNFLKYIKENGVLKNDRTGTGTRSIFGYQMRFDLQKGFPLVTTKKIHIPSVVHELLWFLSGSTNIKYLNDNNVRIWNEWATVDGELGPIYGKQWRDFNGQGIDQIADVIQMLKTNPNSRRILVLAWNPCVVPSEKISPQENVVKGNSALPPCHAMFQFYVANNKLSCMLTQRSADAFLGVPFNIASYSLLTHMVAQQCNLDVGELIWSGGDCHIYNNHIEQVNEQLSREPLALPTLKILRKSNSIFDYKYEDFEFENYNHHPAIKAKISV.

Arginine 21 lines the dUMP pocket. Residue histidine 51 coordinates (6R)-5,10-methylene-5,6,7,8-tetrahydrofolate. 123–124 (RR) lines the dUMP pocket. The active-site Nucleophile is cysteine 156. Residues 176 to 179 (RSAD), asparagine 187, and 217 to 219 (HIY) contribute to the dUMP site. Aspartate 179 is a binding site for (6R)-5,10-methylene-5,6,7,8-tetrahydrofolate. Residue serine 273 coordinates (6R)-5,10-methylene-5,6,7,8-tetrahydrofolate.

Belongs to the thymidylate synthase family. Bacterial-type ThyA subfamily. As to quaternary structure, homodimer.

It is found in the cytoplasm. The catalysed reaction is dUMP + (6R)-5,10-methylene-5,6,7,8-tetrahydrofolate = 7,8-dihydrofolate + dTMP. It participates in pyrimidine metabolism; dTTP biosynthesis. Functionally, catalyzes the reductive methylation of 2'-deoxyuridine-5'-monophosphate (dUMP) to 2'-deoxythymidine-5'-monophosphate (dTMP) while utilizing 5,10-methylenetetrahydrofolate (mTHF) as the methyl donor and reductant in the reaction, yielding dihydrofolate (DHF) as a by-product. This enzymatic reaction provides an intracellular de novo source of dTMP, an essential precursor for DNA biosynthesis. The chain is Thymidylate synthase from Francisella tularensis subsp. holarctica (strain FTNF002-00 / FTA).